Here is a 461-residue protein sequence, read N- to C-terminus: Toxin CfTX-B (461 aa).

Positions 1–24 are cleaved as a signal peptide; that stretch reads MDPRISSRLRALALLVFVISITDG. Positions 25-31 are excised as a propeptide; that stretch reads IPNRAKR.

Belongs to the jellyfish toxin family. Type II subfamily. Oligomer. Post-translationally, contains 2 disulfide bonds. Nematocytes.

Its subcellular location is the secreted. The protein localises to the nematocyst. It localises to the target cell membrane. The fraction containing this toxin and CfTX-B shows potent hemolytic activity. This fraction causes minor effects on the cardiovascular system of anesthetized rats (at 25 ug/kg), since it has no significant effects on heart rate but produces relatively small increases in mean arterial pressure. The protein is Toxin CfTX-B of Chironex fleckeri (Australian box jellyfish).